We begin with the raw amino-acid sequence, 212 residues long: Thymidylate kinase (212 aa).

Gly-10–Thr-17 serves as a coordination point for ATP.

It belongs to the thymidylate kinase family.

The catalysed reaction is dTMP + ATP = dTDP + ADP. In terms of biological role, phosphorylation of dTMP to form dTDP in both de novo and salvage pathways of dTTP synthesis. The sequence is that of Thymidylate kinase from Yersinia pestis bv. Antiqua (strain Antiqua).